Consider the following 155-residue polypeptide: Small ribosomal subunit protein uS7 (155 aa).

It belongs to the universal ribosomal protein uS7 family. Part of the 30S ribosomal subunit. Contacts proteins S9 and S11.

Its function is as follows. One of the primary rRNA binding proteins, it binds directly to 16S rRNA where it nucleates assembly of the head domain of the 30S subunit. Is located at the subunit interface close to the decoding center, probably blocks exit of the E-site tRNA. The sequence is that of Small ribosomal subunit protein uS7 from Pseudothermotoga lettingae (strain ATCC BAA-301 / DSM 14385 / NBRC 107922 / TMO) (Thermotoga lettingae).